A 103-amino-acid polypeptide reads, in one-letter code: Iron-sulfur cluster assembly protein CyaY (103 aa).

It belongs to the frataxin family.

In terms of biological role, involved in iron-sulfur (Fe-S) cluster assembly. May act as a regulator of Fe-S biogenesis. The polypeptide is Iron-sulfur cluster assembly protein CyaY (Rickettsia africae (strain ESF-5)).